The primary structure comprises 336 residues: Anthranilate phosphoribosyltransferase (336 aa).

Residues G78, 81-82 (GD), T86, 88-91 (NVST), 106-114 (KHGNYSVSS), and S118 contribute to the 5-phospho-alpha-D-ribose 1-diphosphate site. G78 is a binding site for anthranilate. S90 contributes to the Mg(2+) binding site. Position 109 (N109) interacts with anthranilate. Residue R164 coordinates anthranilate. Residues D222 and E223 each coordinate Mg(2+).

This sequence belongs to the anthranilate phosphoribosyltransferase family. Homodimer. Mg(2+) serves as cofactor.

The catalysed reaction is N-(5-phospho-beta-D-ribosyl)anthranilate + diphosphate = 5-phospho-alpha-D-ribose 1-diphosphate + anthranilate. It participates in amino-acid biosynthesis; L-tryptophan biosynthesis; L-tryptophan from chorismate: step 2/5. In terms of biological role, catalyzes the transfer of the phosphoribosyl group of 5-phosphorylribose-1-pyrophosphate (PRPP) to anthranilate to yield N-(5'-phosphoribosyl)-anthranilate (PRA). In Halobacterium salinarum (strain ATCC 29341 / DSM 671 / R1), this protein is Anthranilate phosphoribosyltransferase.